Reading from the N-terminus, the 249-residue chain is Tryptophan synthase alpha chain (249 aa).

Residues glutamate 43 and aspartate 54 each act as proton acceptor in the active site.

This sequence belongs to the TrpA family. In terms of assembly, tetramer of two alpha and two beta chains.

It catalyses the reaction (1S,2R)-1-C-(indol-3-yl)glycerol 3-phosphate + L-serine = D-glyceraldehyde 3-phosphate + L-tryptophan + H2O. The protein operates within amino-acid biosynthesis; L-tryptophan biosynthesis; L-tryptophan from chorismate: step 5/5. Its function is as follows. The alpha subunit is responsible for the aldol cleavage of indoleglycerol phosphate to indole and glyceraldehyde 3-phosphate. This is Tryptophan synthase alpha chain from Campylobacter jejuni subsp. jejuni serotype O:6 (strain 81116 / NCTC 11828).